A 174-amino-acid polypeptide reads, in one-letter code: ATP-dependent protease subunit HslV (174 aa).

T2 is an active-site residue. A157, C160, and T163 together coordinate Na(+).

This sequence belongs to the peptidase T1B family. HslV subfamily. A double ring-shaped homohexamer of HslV is capped on each side by a ring-shaped HslU homohexamer. The assembly of the HslU/HslV complex is dependent on binding of ATP.

The protein resides in the cytoplasm. The enzyme catalyses ATP-dependent cleavage of peptide bonds with broad specificity.. Its activity is regulated as follows. Allosterically activated by HslU binding. Protease subunit of a proteasome-like degradation complex believed to be a general protein degrading machinery. In Shewanella baltica (strain OS195), this protein is ATP-dependent protease subunit HslV.